The sequence spans 133 residues: DNA-directed RNA polymerase subunit omega (133 aa).

This sequence belongs to the RNA polymerase subunit omega family. The RNAP catalytic core consists of 2 alpha, 1 beta, 1 beta' and 1 omega subunit. When a sigma factor is associated with the core the holoenzyme is formed, which can initiate transcription.

It carries out the reaction RNA(n) + a ribonucleoside 5'-triphosphate = RNA(n+1) + diphosphate. Its function is as follows. Promotes RNA polymerase assembly. Latches the N- and C-terminal regions of the beta' subunit thereby facilitating its interaction with the beta and alpha subunits. This chain is DNA-directed RNA polymerase subunit omega, found in Mesorhizobium japonicum (strain LMG 29417 / CECT 9101 / MAFF 303099) (Mesorhizobium loti (strain MAFF 303099)).